The following is a 405-amino-acid chain: MNASGSAPLGANSEVGQLRAVLLHRPGDELKRLTPRNNDQLLFDGLPWVDRAQEEHDAFADLLRSRGVEVLLLSDLLTETLGASGAARIQGIGAAVDARKLGHTLAQELAAHLRGVPAPDLSTILTAGMTFDELPVAANTASLVRRMHHGGDFVIDPLPNLLFTRDSSFWIGPRVAITSLALPARVRETSLTDIIYAHHPRFRGARRAYESHTAPVEGGDVLLLAPGVVAVGVGERTTPAGAEALARSVFEDELAHTVLVVPIAQARASMHLDTVCTMVDHDAVVMYPIIQDTLSAFTIHREDKGVSIRGADPFLTAAAEAMGIGKLRVIDTGLDNVTAEREQWDDGNNTLALAPGVVVAYERNVETNARLEASGIEVLRIAGSELGSGRGGPRCMSCPVARDPL.

The Amidino-cysteine intermediate role is filled by cysteine 395.

Belongs to the arginine deiminase family.

Its subcellular location is the cytoplasm. It catalyses the reaction L-arginine + H2O = L-citrulline + NH4(+). It functions in the pathway amino-acid degradation; L-arginine degradation via ADI pathway; carbamoyl phosphate from L-arginine: step 1/2. The chain is Arginine deiminase from Rhodococcus jostii (strain RHA1).